A 296-amino-acid chain; its full sequence is GTPase Era (296 aa).

The Era-type G domain maps to 3 to 170; sequence KSGFVTIIGR…IELMVKHLNE (168 aa). A G1 region spans residues 11–18; that stretch reads GRPNVGKS. 11–18 provides a ligand contact to GTP; that stretch reads GRPNVGKS. Residues 37 to 41 are G2; that stretch reads QTTRN. Residues 58 to 61 form a G3 region; the sequence is DTPG. GTP is bound by residues 58 to 62 and 120 to 123; these read DTPGM and NKID. Positions 120-123 are G4; that stretch reads NKID. The interval 149–151 is G5; sequence ISA. The region spanning 201 to 277 is the KH type-2 domain; that stretch reads LSQEVPHGIA…NMKIWVKVKK (77 aa).

This sequence belongs to the TRAFAC class TrmE-Era-EngA-EngB-Septin-like GTPase superfamily. Era GTPase family. As to quaternary structure, monomer.

The protein resides in the cytoplasm. It localises to the cell membrane. Its function is as follows. An essential GTPase that binds both GDP and GTP, with rapid nucleotide exchange. Plays a role in 16S rRNA processing and 30S ribosomal subunit biogenesis and possibly also in cell cycle regulation and energy metabolism. The protein is GTPase Era of Clostridium acetobutylicum (strain ATCC 824 / DSM 792 / JCM 1419 / IAM 19013 / LMG 5710 / NBRC 13948 / NRRL B-527 / VKM B-1787 / 2291 / W).